The sequence spans 212 residues: MIGGKEKEVFAKIREHLNAVESTLMAFRKLFEVYIRGDVERAEELLKDVEREESRADELRRNIELMLYGGAFLPASRGDYVRLSELIDNVADAAESAAHSLMFAKPIVPKGLEDEIIRLVDESLKTFEYLKGATLALEDSVDDALMLAKKTETQEEDADKIEYDLLRKIFSREDISTYAKLIWNQVITKIGDVADRAEDASDQIMLIAIKRR.

The protein belongs to the UPF0111 family.

This Pyrococcus horikoshii (strain ATCC 700860 / DSM 12428 / JCM 9974 / NBRC 100139 / OT-3) protein is UPF0111 protein PH1389.